The chain runs to 102 residues: Small ribosomal subunit protein uS10 (102 aa).

Belongs to the universal ribosomal protein uS10 family. Part of the 30S ribosomal subunit.

Functionally, involved in the binding of tRNA to the ribosomes. The chain is Small ribosomal subunit protein uS10 from Mycoplasma mycoides subsp. mycoides SC (strain CCUG 32753 / NCTC 10114 / PG1).